Consider the following 149-residue polypeptide: Endoribonuclease YbeY (149 aa).

Positions 113, 117, and 123 each coordinate Zn(2+).

The protein belongs to the endoribonuclease YbeY family. Zn(2+) serves as cofactor.

It localises to the cytoplasm. Functionally, single strand-specific metallo-endoribonuclease involved in late-stage 70S ribosome quality control and in maturation of the 3' terminus of the 16S rRNA. The sequence is that of Endoribonuclease YbeY from Saccharophagus degradans (strain 2-40 / ATCC 43961 / DSM 17024).